The following is a 137-amino-acid chain: Nucleoside diphosphate kinase (137 aa).

The ATP site is built by Lys9, Phe57, Arg85, Thr91, Arg102, and Asn112. His115 functions as the Pros-phosphohistidine intermediate in the catalytic mechanism.

Belongs to the NDK family. As to quaternary structure, homotetramer. It depends on Mg(2+) as a cofactor.

The protein resides in the cytoplasm. The catalysed reaction is a 2'-deoxyribonucleoside 5'-diphosphate + ATP = a 2'-deoxyribonucleoside 5'-triphosphate + ADP. It catalyses the reaction a ribonucleoside 5'-diphosphate + ATP = a ribonucleoside 5'-triphosphate + ADP. Functionally, major role in the synthesis of nucleoside triphosphates other than ATP. The ATP gamma phosphate is transferred to the NDP beta phosphate via a ping-pong mechanism, using a phosphorylated active-site intermediate. The polypeptide is Nucleoside diphosphate kinase (Helicobacter hepaticus (strain ATCC 51449 / 3B1)).